The following is a 211-amino-acid chain: Small ribosomal subunit protein uS3c (211 aa).

One can recognise a KH type-2 domain in the interval I39–Q109.

It belongs to the universal ribosomal protein uS3 family. In terms of assembly, part of the 30S ribosomal subunit.

It localises to the plastid. Its subcellular location is the chloroplast. This Ostreococcus tauri protein is Small ribosomal subunit protein uS3c (rps3).